The chain runs to 72 residues: Mitotic-spindle organizing protein 1 (72 aa).

It belongs to the MOZART1 family. As to quaternary structure, part of the gamma-tubulin complex.

It is found in the cytoplasm. The protein localises to the cytoskeleton. Its subcellular location is the microtubule organizing center. It localises to the centrosome. The protein resides in the spindle. Functionally, required for gamma-tubulin complex recruitment to the centrosome. The protein is Mitotic-spindle organizing protein 1 (mzt1) of Xenopus laevis (African clawed frog).